Consider the following 185-residue polypeptide: Elongation factor P (185 aa).

This sequence belongs to the elongation factor P family.

Its subcellular location is the cytoplasm. Its pathway is protein biosynthesis; polypeptide chain elongation. In terms of biological role, involved in peptide bond synthesis. Stimulates efficient translation and peptide-bond synthesis on native or reconstituted 70S ribosomes in vitro. Probably functions indirectly by altering the affinity of the ribosome for aminoacyl-tRNA, thus increasing their reactivity as acceptors for peptidyl transferase. In Clostridium perfringens (strain ATCC 13124 / DSM 756 / JCM 1290 / NCIMB 6125 / NCTC 8237 / Type A), this protein is Elongation factor P.